An 898-amino-acid chain; its full sequence is Histone-lysine N-methyltransferase mes-4 (898 aa).

The segment at 1–68 is disordered; that stretch reads MLPSSGDSSK…APILTNAPKD (68 aa). A compositionally biased stretch (polar residues) spans 36-51; it reads QRNATPQGAGSETSSN. PHD-type zinc fingers lie at residues 126 to 214 and 303 to 355; these read DSKC…CNLD and IKAC…CVCG. The SET domain occupies 537-665; that stretch reads EKIKLAATLC…DGDEITFSYN (129 aa). Positions 671-687 constitute a Post-SET domain; it reads NLPDCECGAENCMGTMG. A disordered region spans residues 689–847; it reads AKREKPEVAD…SLQTIQETGK (159 aa). Residues 692–704 show a composition bias toward basic and acidic residues; the sequence is EKPEVADSSEKAA. Residues 705–719 are compositionally biased toward basic residues; that stretch reads KKNKSSKKKSVKNQN. Low complexity-rich tracts occupy residues 737–751 and 761–773; these read ISPSKPSTSSASSTS and SQNKKNLKKNSNQ. Residues 774 to 788 are compositionally biased toward polar residues; it reads PVADTGSTLSTSTEL. Residues 802–811 show a composition bias toward low complexity; it reads SSRSRAASSS.

Belongs to the class V-like SAM-binding methyltransferase superfamily. Histone-lysine methyltransferase family. SET2 subfamily. In terms of tissue distribution, in adults, it is predominantly expressed in the germline, and weakly expressed in intestinal cells.

The protein resides in the nucleus. Its subcellular location is the chromosome. It catalyses the reaction L-lysyl(36)-[histone H3] + 2 S-adenosyl-L-methionine = N(6),N(6)-dimethyl-L-lysyl(36)-[histone H3] + 2 S-adenosyl-L-homocysteine + 2 H(+). Its function is as follows. Histone methyltransferase. Dimethylates 'Lys-36' of histone H3, a specific tag for epigenetic transcriptional activation. Plays a central role in early development and is responsible for all H3 'Lys-36' dimethylation until about the 40-cell stage. Indirectly involved in the global inactivation of the X chromosomes in germline cells, possibly by excluding the mes-2-mes-3-mes-6 repressive Polycomb complex from the autosomes. Not related to transcription elongation. Required for small-RNA-induced H3K27 trimethylation. May suppress sensitivity to RNAi. May regulate the expression of genes required for vulval development. This Caenorhabditis elegans protein is Histone-lysine N-methyltransferase mes-4.